Here is a 274-residue protein sequence, read N- to C-terminus: Small nuclear ribonucleoprotein-associated protein B (274 aa).

The Sm domain maps to 5–85; it reads PKSSKMLQYI…VVSMSVEAPP (81 aa). The disordered stretch occupies residues 148 to 274; it reads PGGGVPPPMG…PMGRGGFQRK (127 aa). Copy 1 of the repeat occupies 162–171; that stretch reads PPQGFPPGGP. A 6 X 10 AA repeats of P-P-Q-G-F-P-P-G-G-P region spans residues 162-265; it reads PPQGFPPGGP…PPQGFPPGGP (104 aa). Positions 173–187 are enriched in low complexity; the sequence is PQGAFNNNPNNNNGG. Tandem repeats lie at residues 188–197, 204–213, 225–234, 241–250, and 256–265. Over residues 216–226 the composition is skewed to low complexity; that stretch reads GPNLNNGNMPP. The segment covering 265–274 has biased composition (gly residues); sequence PMGRGGFQRK.

It belongs to the snRNP SmB/SmN family.

Its subcellular location is the cytoplasm. The protein localises to the cytosol. It localises to the nucleus. Functionally, plays a role in pre-mRNA splicing as a core component of the spliceosomal U1, U2, U4 and U5 small nuclear ribonucleoproteins (snRNPs), the building blocks of the spliceosome. This chain is Small nuclear ribonucleoprotein-associated protein B (snrpb), found in Dictyostelium discoideum (Social amoeba).